Reading from the N-terminus, the 103-residue chain is Small ribosomal subunit protein uS10 (103 aa).

The protein belongs to the universal ribosomal protein uS10 family. In terms of assembly, part of the 30S ribosomal subunit.

Functionally, involved in the binding of tRNA to the ribosomes. The chain is Small ribosomal subunit protein uS10 from Buchnera aphidicola subsp. Acyrthosiphon pisum (strain 5A).